The sequence spans 472 residues: Tryptophanase (472 aa).

N6-(pyridoxal phosphate)lysine is present on lysine 270.

This sequence belongs to the beta-eliminating lyase family. In terms of assembly, homotetramer. It depends on pyridoxal 5'-phosphate as a cofactor.

It carries out the reaction L-tryptophan + H2O = indole + pyruvate + NH4(+). Its pathway is amino-acid degradation; L-tryptophan degradation via pyruvate pathway; indole and pyruvate from L-tryptophan: step 1/1. In Haemophilus influenzae, this protein is Tryptophanase (tnaA).